A 411-amino-acid polypeptide reads, in one-letter code: Putative nickel insertion protein (411 aa).

It belongs to the LarC family.

This is Putative nickel insertion protein from Acaryochloris marina (strain MBIC 11017).